The primary structure comprises 1014 residues: Endogenous retrovirus group K member 10 Pol protein (1014 aa).

In terms of domain architecture, Reverse transcriptase spans 57 to 245 (LEKGHIEPSF…TPFHYLGMQI (189 aa)). The short motif at 161 to 164 (LPQG) is the LPQG element. Residues 195-198 (YIDD) carry the YXDD motif. In terms of domain architecture, RNase H type-1 spans 460–590 (LENALTVFTD…ADLLVSSALI (131 aa)). Mg(2+)-binding residues include D469, E497, D517, and D582. The segment at 587–628 (SALIKAQELHALTHVNAAGLKNKFDVTWKQAKDIVQHCTQCQ) adopts an Integrase-type zinc-finger fold. Zn(2+)-binding residues include H596, H600, C624, and C627. Residues 642-803 (RGLCPNALWQ…TSAEQHLTGK (162 aa)) form the Integrase catalytic domain. The segment at residues 811–859 (KLIWWKDNKNKTWEIGKVITWGRGFACVSPGENQLPVWLPTRHLKFYNE) is a DNA-binding region (integrase-type).

It belongs to the beta type-B retroviral polymerase family. HERV class-II K(HML-2) pol subfamily.

It catalyses the reaction DNA(n) + a 2'-deoxyribonucleoside 5'-triphosphate = DNA(n+1) + diphosphate. It carries out the reaction Endonucleolytic cleavage to 5'-phosphomonoester.. In terms of biological role, early post-infection, the reverse transcriptase converts the viral RNA genome into double-stranded viral DNA. The RNase H domain of the reverse transcriptase performs two functions. It degrades the RNA template and specifically removes the RNA primer from the RNA/DNA hybrid. Following nuclear import, the integrase catalyzes the insertion of the linear, double-stranded viral DNA into the host cell chromosome. Endogenous Pol proteins may have kept, lost or modified their original function during evolution. This is Endogenous retrovirus group K member 10 Pol protein (ERVK-10) from Homo sapiens (Human).